The primary structure comprises 61 residues: Small ribosomal subunit protein uS14 (61 aa).

Zn(2+)-binding residues include Cys24, Cys27, Cys40, and Cys43.

It belongs to the universal ribosomal protein uS14 family. Zinc-binding uS14 subfamily. Part of the 30S ribosomal subunit. Contacts proteins S3 and S10. Zn(2+) is required as a cofactor.

Functionally, binds 16S rRNA, required for the assembly of 30S particles and may also be responsible for determining the conformation of the 16S rRNA at the A site. In Acetivibrio thermocellus (strain ATCC 27405 / DSM 1237 / JCM 9322 / NBRC 103400 / NCIMB 10682 / NRRL B-4536 / VPI 7372) (Clostridium thermocellum), this protein is Small ribosomal subunit protein uS14.